A 363-amino-acid chain; its full sequence is Ribosome-binding ATPase YchF (363 aa).

The OBG-type G domain occupies Phe3–Leu256. Position 12–17 (Asn12–Thr17) interacts with ATP. Residues Ser16 and Thr36 each coordinate Mg(2+). In terms of domain architecture, TGS spans Asn278 to Phe361.

It belongs to the TRAFAC class OBG-HflX-like GTPase superfamily. OBG GTPase family. YchF/OLA1 subfamily. Requires Mg(2+) as cofactor.

Its function is as follows. ATPase that binds to both the 70S ribosome and the 50S ribosomal subunit in a nucleotide-independent manner. In Pasteurella multocida (strain Pm70), this protein is Ribosome-binding ATPase YchF.